Reading from the N-terminus, the 616-residue chain is 1-deoxy-D-xylulose-5-phosphate synthase (616 aa).

Residues histidine 74 and 115-117 contribute to the thiamine diphosphate site; that span reads GHS. Aspartate 146 serves as a coordination point for Mg(2+). Thiamine diphosphate contacts are provided by residues 147–148, asparagine 175, tyrosine 282, and glutamate 365; that span reads GA. Mg(2+) is bound at residue asparagine 175.

This sequence belongs to the transketolase family. DXPS subfamily. As to quaternary structure, homodimer. The cofactor is Mg(2+). Thiamine diphosphate is required as a cofactor.

The enzyme catalyses D-glyceraldehyde 3-phosphate + pyruvate + H(+) = 1-deoxy-D-xylulose 5-phosphate + CO2. It participates in metabolic intermediate biosynthesis; 1-deoxy-D-xylulose 5-phosphate biosynthesis; 1-deoxy-D-xylulose 5-phosphate from D-glyceraldehyde 3-phosphate and pyruvate: step 1/1. In terms of biological role, catalyzes the acyloin condensation reaction between C atoms 2 and 3 of pyruvate and glyceraldehyde 3-phosphate to yield 1-deoxy-D-xylulose-5-phosphate (DXP). This chain is 1-deoxy-D-xylulose-5-phosphate synthase, found in Chromobacterium violaceum (strain ATCC 12472 / DSM 30191 / JCM 1249 / CCUG 213 / NBRC 12614 / NCIMB 9131 / NCTC 9757 / MK).